The primary structure comprises 156 residues: Small ribosomal subunit protein uS7 (156 aa).

It belongs to the universal ribosomal protein uS7 family. In terms of assembly, part of the 30S ribosomal subunit. Contacts proteins S9 and S11.

Functionally, one of the primary rRNA binding proteins, it binds directly to 16S rRNA where it nucleates assembly of the head domain of the 30S subunit. Is located at the subunit interface close to the decoding center, probably blocks exit of the E-site tRNA. The sequence is that of Small ribosomal subunit protein uS7 from Buchnera aphidicola subsp. Baizongia pistaciae (strain Bp).